An 899-amino-acid chain; its full sequence is Putative lipoxygenase 5 (899 aa).

Disordered stretches follow at residues 15 to 34 (AGSRGMGKGASRRRTARSTA), 48 to 68 (APVEQQRGAGRPEAHPQSVAA), and 258 to 291 (VASARPVLGGEQMPYPRRMRTGRPSTATDASAES). The PLAT domain maps to 68 to 204 (ARAVVTVRRR…VSRDRRVFFS (137 aa)). Positions 207–899 (PYLPSETPPG…CRGVPNSVTI (693 aa)) constitute a Lipoxygenase domain. The Fe cation site is built by His-559, His-564, His-751, Asn-755, and Ile-899.

This sequence belongs to the lipoxygenase family. Fe cation serves as cofactor.

The enzyme catalyses (9Z,12Z)-octadecadienoate + O2 = (13S)-hydroperoxy-(9Z,11E)-octadecadienoate. It catalyses the reaction (9Z,12Z,15Z)-octadecatrienoate + O2 = (13S)-hydroperoxy-(9Z,11E,15Z)-octadecatrienoate. It participates in lipid metabolism; oxylipin biosynthesis. Plant lipoxygenase may be involved in a number of diverse aspects of plant physiology including growth and development, pest resistance, and senescence or responses to wounding. Catalyzes the hydroperoxidation of lipids containing a cis,cis-1,4-pentadiene structure. The sequence is that of Putative lipoxygenase 5 from Oryza sativa subsp. japonica (Rice).